The sequence spans 101 residues: NAD(P)H-quinone oxidoreductase subunit 4L (101 aa).

3 helical membrane passes run 3–23 (LQYF…GLVT), 30–50 (VLMS…AFSN), and 64–84 (IFVI…VLAI).

Belongs to the complex I subunit 4L family. NDH-1 can be composed of about 15 different subunits; different subcomplexes with different compositions have been identified which probably have different functions.

It is found in the cellular thylakoid membrane. It carries out the reaction a plastoquinone + NADH + (n+1) H(+)(in) = a plastoquinol + NAD(+) + n H(+)(out). The catalysed reaction is a plastoquinone + NADPH + (n+1) H(+)(in) = a plastoquinol + NADP(+) + n H(+)(out). Its function is as follows. NDH-1 shuttles electrons from an unknown electron donor, via FMN and iron-sulfur (Fe-S) centers, to quinones in the respiratory and/or the photosynthetic chain. The immediate electron acceptor for the enzyme in this species is believed to be plastoquinone. Couples the redox reaction to proton translocation, and thus conserves the redox energy in a proton gradient. Cyanobacterial NDH-1 also plays a role in inorganic carbon-concentration. The polypeptide is NAD(P)H-quinone oxidoreductase subunit 4L (Leptolyngbya boryana (Plectonema boryanum)).